The following is a 657-amino-acid chain: uncharacterized protein (657 aa).

An N-terminal signal peptide occupies residues 1–26 (MFGKGLVKKSLLFFSGVSTMAVFLVS). Cysteine 27 carries the N-palmitoyl cysteine lipid modification. Cysteine 27 carries S-diacylglycerol cysteine lipidation. Disordered stretches follow at residues 291 to 316 (ISPK…FSST), 468 to 496 (RLSS…DGII), and 516 to 563 (KSMT…KETN). The segment covering 294–304 (KQGSDNNSNLS) has biased composition (polar residues). Positions 469–495 (LSSDDTNTKKALKEVSTHKNGSDKDGI) are enriched in basic and acidic residues. The segment covering 516-525 (KSMTDNNSGT) has biased composition (polar residues). The span at 526 to 545 (EQKKNLSEVDTKKKEKESKG) shows a compositional bias: basic and acidic residues. Positions 546-559 (KTQSNGQDSGQQNG) are enriched in low complexity.

This sequence to T.pallidum TmpC.

It is found in the cell membrane. This is an uncharacterized protein from Mycoplasma pneumoniae (strain ATCC 29342 / M129 / Subtype 1) (Mycoplasmoides pneumoniae).